Consider the following 1221-residue polypeptide: DNA-directed RNA polymerase subunit beta' (1221 aa).

4 residues coordinate Zn(2+): C60, C62, C75, and C78. Mg(2+) is bound by residues D449, D451, and D453. Zn(2+) is bound by residues C820, C894, C901, and C904.

This sequence belongs to the RNA polymerase beta' chain family. As to quaternary structure, the RNAP catalytic core consists of 2 alpha, 1 beta, 1 beta' and 1 omega subunit. When a sigma factor is associated with the core the holoenzyme is formed, which can initiate transcription. Requires Mg(2+) as cofactor. Zn(2+) is required as a cofactor.

The catalysed reaction is RNA(n) + a ribonucleoside 5'-triphosphate = RNA(n+1) + diphosphate. In terms of biological role, DNA-dependent RNA polymerase catalyzes the transcription of DNA into RNA using the four ribonucleoside triphosphates as substrates. In Ligilactobacillus salivarius (strain UCC118) (Lactobacillus salivarius), this protein is DNA-directed RNA polymerase subunit beta'.